The primary structure comprises 450 residues: Probable ECA polymerase (450 aa).

The next 11 helical transmembrane spans lie at 6–26, 37–57, 63–83, 118–138, 155–175, 181–201, 207–227, 228–248, 341–361, 378–398, and 410–430; these read FSGL…LTWF, VFFS…TSVL, VGVA…CFYA, VILM…NGFL, GVAL…VYFL, AWLF…MIVG, IIIA…ISLW, MLAA…LKRY, LVVM…GLII, YKAA…IVLA, and VFFI…YWLF.

The protein belongs to the WzyE family. Probably part of a complex composed of WzxE, WzyE and WzzE.

The protein resides in the cell inner membrane. It participates in bacterial outer membrane biogenesis; enterobacterial common antigen biosynthesis. In terms of biological role, probably involved in the polymerization of enterobacterial common antigen (ECA) trisaccharide repeat units. This chain is Probable ECA polymerase, found in Shigella flexneri.